We begin with the raw amino-acid sequence, 344 residues long: MERFRPLLNKVAMGTALNRDEAAYAFDKMMSGETTPSQMGALLMGLRVRGETVDEIVGAVSVMRAKMLTVDAPVGSVDVVGTGGDASGSYNISTCASFIVAGAGVPVAKHGNRALSSKSGAADVLAALGVRIDLAPAAISRCIAETGIGFMFAPTHHPAMKNVGPTRVELGTRTIFNLLGPLSNPAGVKRQMVGVFAKAWLSPLAEVLKALGSERAWVVHGSDGLDEITISGTTDVASLEDGRVHTFEISPEDVGLTRAAPEALRGGDAEHNAAALRAVLEGAPGAYRDVAVMNAGAALLISGRAASLRDGVDMAKASIDSGAAKAKLDQLARATQALAPQVDA.

Residues G81, 84 to 85 (GD), S89, 91 to 94 (NIST), 109 to 117 (KHGNRALSS), and A121 each bind 5-phospho-alpha-D-ribose 1-diphosphate. Anthranilate is bound at residue G81. Position 93 (S93) interacts with Mg(2+). N112 is a binding site for anthranilate. R167 provides a ligand contact to anthranilate. 2 residues coordinate Mg(2+): D226 and E227.

This sequence belongs to the anthranilate phosphoribosyltransferase family. In terms of assembly, homodimer. It depends on Mg(2+) as a cofactor.

It carries out the reaction N-(5-phospho-beta-D-ribosyl)anthranilate + diphosphate = 5-phospho-alpha-D-ribose 1-diphosphate + anthranilate. It functions in the pathway amino-acid biosynthesis; L-tryptophan biosynthesis; L-tryptophan from chorismate: step 2/5. Its function is as follows. Catalyzes the transfer of the phosphoribosyl group of 5-phosphorylribose-1-pyrophosphate (PRPP) to anthranilate to yield N-(5'-phosphoribosyl)-anthranilate (PRA). This chain is Anthranilate phosphoribosyltransferase, found in Azorhizobium caulinodans (strain ATCC 43989 / DSM 5975 / JCM 20966 / LMG 6465 / NBRC 14845 / NCIMB 13405 / ORS 571).